Here is an 85-residue protein sequence, read N- to C-terminus: Conotoxin Cap15b (85 aa).

The N-terminal stretch at 1–23 is a signal peptide; it reads MEKLTFLILVATVLLTIHVLVQS. Residues 24-49 constitute a propeptide that is removed on maturation; sequence DGDKHLKRRPKQYATKRLSALMRGHR. Residue glutamine 50 is modified to Pyrrolidone carboxylic acid.

This sequence belongs to the conotoxin O2 superfamily. Contains 4 disulfide bonds. In terms of tissue distribution, expressed by the venom duct.

It localises to the secreted. The sequence is that of Conotoxin Cap15b from Conus capitaneus (Captain cone).